Here is a 2703-residue protein sequence, read N- to C-terminus: Neurogenic locus Notch protein (2703 aa).

The first 52 residues, 1–52 (MQSQRSRRRSRAPNTWICFWINKMHAVASLPASLPLLLLTLAFANLPNTVRG), serve as a signal peptide directing secretion. At 53–1745 (TDTALVAASC…NGEPPANVKY (1693 aa)) the chain is on the extracellular side. EGF-like domains lie at 58-95 (VAASCTSVGCQNGGTCVTQLNGKTYCACDSHYVGDYCE), 96-136 (HRNP…SLCE), 139-176 (VPNACDHVTCLNGGTCQLKTLEEYTCACANGYTGERCE), and 177-215 (TKNLCASSPCRNGATCTALAGSSSFTCSCPPGFTGDTCS). 24 disulfide bridges follow: cysteine 62/cysteine 73, cysteine 67/cysteine 83, cysteine 85/cysteine 94, cysteine 100/cysteine 111, cysteine 105/cysteine 124, cysteine 126/cysteine 135, cysteine 143/cysteine 154, cysteine 148/cysteine 164, cysteine 166/cysteine 175, cysteine 181/cysteine 192, cysteine 186/cysteine 203, cysteine 205/cysteine 214, cysteine 221/cysteine 232, cysteine 226/cysteine 241, cysteine 243/cysteine 252, cysteine 259/cysteine 270, cysteine 264/cysteine 279, cysteine 281/cysteine 290, cysteine 297/cysteine 308, cysteine 302/cysteine 317, cysteine 319/cysteine 328, cysteine 335/cysteine 349, cysteine 343/cysteine 358, and cysteine 360/cysteine 369. Threonine 72 carries O-linked (Fuc...) threonine glycosylation. O-linked (Fuc...) threonine glycosylation is present at threonine 110. O-linked (Fuc...) threonine glycosylation is present at threonine 153. Serine 183 carries an O-linked (Glc...) serine glycan. Threonine 191 is a glycosylation site (O-linked (Fuc...) threonine). Threonine 210 carries an O-linked (GlcNAc...) threonine glycan. In terms of domain architecture, EGF-like 5; calcium-binding spans 217–253 (DIEECQSNPCKYGGTCVNTHGSYQCMCPTGYTGKDCD). Residue serine 223 is glycosylated (O-linked (Glc...) serine). O-linked (Fuc...) threonine glycosylation is present at threonine 231. The EGF-like 6 domain occupies 255–291 (KYKPCSPSPCQNGGICRSNGLSYECKCPKGFEGKNCE). The region spanning 293–329 (NYDDCLGHLCQNGGTCIDGISDYTCRCPPNFTGRFCQ) is the EGF-like 7; calcium-binding domain. An O-linked (Fuc...) threonine glycan is attached at threonine 307. An N-linked (GlcNAc...) asparagine glycan is attached at asparagine 322. The region spanning 331-370 (DVDECAQRDHPVCQNGATCTNTHGSYSCICVNGWAGLDCS) is the EGF-like 8; calcium-binding domain. The O-linked (Fuc...) threonine glycan is linked to threonine 348. Asparagine 371 carries an N-linked (GlcNAc...) asparagine glycan. The EGF-like 9; calcium-binding domain maps to 372-408 (NTDDCKQAACFYGATCIDGVGSFYCQCTKGKTGLLCH). Disulfide bonds link cysteine 376/cysteine 387, cysteine 381/cysteine 396, cysteine 398/cysteine 407, cysteine 413/cysteine 424, cysteine 418/cysteine 435, cysteine 437/cysteine 446, cysteine 453/cysteine 465, and cysteine 459/cysteine 474. The O-linked (Fuc...) threonine glycan is linked to threonine 386. The region spanning 409 to 447 (LDDACTSNPCHADAICDTSPINGSYACSCATGYKGVDCS) is the EGF-like 10 domain. O-linked (Glc...) serine glycosylation is present at serine 427. Asparagine 430 carries N-linked (GlcNAc...) asparagine glycosylation. One can recognise an EGF-like 11; calcium-binding domain in the interval 449 to 486 (DIDECDQGSPCEHNGICVNTPGSYRCNCSQGFTGPRCE). The N-linked (GlcNAc...) asparagine glycan is linked to asparagine 475. 78 disulfide bridges follow: cysteine 476–cysteine 485, cysteine 492–cysteine 503, cysteine 497–cysteine 512, cysteine 514–cysteine 523, cysteine 530–cysteine 541, cysteine 535–cysteine 550, cysteine 552–cysteine 561, cysteine 568–cysteine 579, cysteine 573–cysteine 588, cysteine 590–cysteine 599, cysteine 606–cysteine 616, cysteine 611–cysteine 625, cysteine 627–cysteine 636, cysteine 643–cysteine 654, cysteine 648–cysteine 663, cysteine 665–cysteine 674, cysteine 681–cysteine 692, cysteine 686–cysteine 701, cysteine 703–cysteine 712, cysteine 719–cysteine 730, cysteine 724–cysteine 739, cysteine 741–cysteine 750, cysteine 757–cysteine 768, cysteine 762–cysteine 777, cysteine 779–cysteine 788, cysteine 795–cysteine 806, cysteine 800–cysteine 815, cysteine 817–cysteine 826, cysteine 833–cysteine 844, cysteine 838–cysteine 853, cysteine 855–cysteine 864, cysteine 871–cysteine 882, cysteine 876–cysteine 893, cysteine 895–cysteine 904, cysteine 911–cysteine 923, cysteine 917–cysteine 932, cysteine 934–cysteine 943, cysteine 950–cysteine 961, cysteine 955–cysteine 970, cysteine 972–cysteine 981, cysteine 988–cysteine 999, cysteine 993–cysteine 1008, cysteine 1010–cysteine 1019, cysteine 1026–cysteine 1037, cysteine 1031–cysteine 1046, cysteine 1048–cysteine 1057, cysteine 1064–cysteine 1075, cysteine 1069–cysteine 1084, cysteine 1086–cysteine 1095, cysteine 1102–cysteine 1113, cysteine 1107–cysteine 1122, cysteine 1124–cysteine 1133, cysteine 1155–cysteine 1160, cysteine 1171–cysteine 1180, cysteine 1187–cysteine 1198, cysteine 1192–cysteine 1207, cysteine 1209–cysteine 1218, cysteine 1225–cysteine 1236, cysteine 1230–cysteine 1245, cysteine 1247–cysteine 1256, cysteine 1263–cysteine 1274, cysteine 1268–cysteine 1283, cysteine 1285–cysteine 1294, cysteine 1301–cysteine 1314, cysteine 1306–cysteine 1323, cysteine 1325–cysteine 1334, cysteine 1341–cysteine 1352, cysteine 1346–cysteine 1361, cysteine 1363–cysteine 1372, cysteine 1379–cysteine 1389, cysteine 1384–cysteine 1400, cysteine 1402–cysteine 1411, cysteine 1419–cysteine 1430, cysteine 1424–cysteine 1439, cysteine 1441–cysteine 1450, cysteine 1482–cysteine 1505, cysteine 1487–cysteine 1500, and cysteine 1496–cysteine 1512. Residue threonine 481 is glycosylated (O-linked (GlcNAc...) threonine). One can recognise an EGF-like 12; calcium-binding domain in the interval 488 to 524 (NINECESHPCQNEGSCLDDPGTFRCVCMPGFTGTQCE). The O-linked (Glc...) serine glycan is linked to serine 494. Serine 502 is a glycosylation site (O-linked (Fuc...) serine). A glycan (O-linked (GlcNAc...) threonine) is linked at threonine 519. Positions 526 to 562 (DIDECQSNPCLNDGTCHDKINGFKCSCALGFTGARCQ) constitute an EGF-like 13; calcium-binding domain. Serine 532 carries O-linked (Glc...) serine glycosylation. The EGF-like 14; calcium-binding domain occupies 564-600 (NIDDCQSQPCRNRGICHDSIAGYSCECPPGYTGTSCE). Residue serine 570 is glycosylated (O-linked (Glc...) serine). Threonine 595 is a glycosylation site (O-linked (GlcNAc...) threonine). Residues 602-637 (NINDCDSNPCHRGKCIDDVNSFKCLCDPGYTGYICQ) enclose the EGF-like 15; calcium-binding domain. Residue serine 608 is glycosylated (O-linked (Glc...) serine). The region spanning 639 to 675 (QINECESNPCQFDGHCQDRVGSYYCQCQAGTSGKNCE) is the EGF-like 16; calcium-binding domain. Serine 645 is a glycosylation site (O-linked (Glc...) serine). The EGF-like 17; calcium-binding domain maps to 677–713 (NVNECHSNPCNNGATCIDGINSYKCQCVPGFTGQHCE). O-linked (Glc...) serine glycosylation occurs at serine 683. Threonine 691 carries an O-linked (Fuc...) threonine glycan. The EGF-like 18; calcium-binding domain occupies 715–751 (NVDECISSPCANNGVCIDQVNGYKCECPRGFYDAHCL). Serine 721 carries an O-linked (Glc...) serine glycan. In terms of domain architecture, EGF-like 19; calcium-binding spans 753-789 (DVDECASNPCVNEGRCEDGINEFICHCPPGYTGKRCE). O-linked (Glc...) serine glycosylation is present at serine 759. Positions 791 to 827 (DIDECSSNPCQHGGTCYDKLNAFSCQCMPGYTGQKCE) constitute an EGF-like 20; calcium-binding domain. The O-linked (Glc...) serine glycan is linked to serine 797. O-linked (Fuc...) threonine glycosylation is present at threonine 805. Residue threonine 822 is glycosylated (O-linked (GlcNAc...) threonine). Residues 829-865 (NIDDCVTNPCGNGGTCIDKVNGYKCVCKVPFTGRDCE) enclose the EGF-like 21; calcium-binding domain. Residue threonine 843 is glycosylated (O-linked (Fuc...) threonine). The region spanning 867 to 905 (KMDPCASNRCKNEAKCTPSSNFLDFSCTCKLGYTGRYCD) is the EGF-like 22 domain. The 38-residue stretch at 907 to 944 (DIDECSLSSPCRNGASCLNVPGSYRCLCTKGYEGRDCA) folds into the EGF-like 23; calcium-binding domain. A glycan (O-linked (Fuc...) serine) is linked at serine 922. Residues 946–982 (NTDDCASFPCQNGGTCLDGIGDYSCLCVDGFDGKHCE) enclose the EGF-like 24; calcium-binding domain. Serine 952 is a glycosylation site (O-linked (Glc...) serine). Threonine 960 carries an O-linked (Fuc...) threonine glycan. The region spanning 984–1020 (DINECLSQPCQNGATCSQYVNSYTCTCPLGFSGINCQ) is the EGF-like 25 domain. Residue serine 990 is glycosylated (O-linked (Glc...) serine). Residue threonine 998 is glycosylated (O-linked (Fuc...) threonine). In terms of domain architecture, EGF-like 26; calcium-binding spans 1022–1058 (NDEDCTESSCLNGGSCIDGINGYNCSCLAGYSGANCQ). O-linked (Fuc...) serine glycosylation is present at serine 1036. Asparagine 1045 is a glycosylation site (N-linked (GlcNAc...) asparagine). 3 EGF-like domains span residues 1060 to 1096 (KLNKCDSNPCLNGATCHEQNNEYTCHCPSGFTGKQCS), 1098 to 1134 (YVDWCGQSPCENGATCSQMKHQFSCKCSAGWTGKLCD), and 1136 to 1181 (QTIS…SYCQ). O-linked (Glc...) serine glycosylation is present at serine 1066. Threonine 1074 carries O-linked (Fuc...) threonine glycosylation. A glycan (O-linked (Fuc...) threonine) is linked at threonine 1112. The N-linked (GlcNAc...) asparagine glycan is linked to asparagine 1157. The EGF-like 30; calcium-binding domain occupies 1183-1219 (EIDECQSQPCQNGGTCRDLIGAYECQCRQGFQGQNCE). Serine 1189 carries O-linked (Glc...) serine glycosylation. An O-linked (Fuc...) threonine glycan is attached at threonine 1197. Residues 1221–1257 (NIDDCAPNPCQNGGTCHDRVMNFSCSCPPGTMGIICE) form the EGF-like 31; calcium-binding domain. Threonine 1235 is a glycosylation site (O-linked (Fuc...) threonine). A glycan (N-linked (GlcNAc...) asparagine) is linked at asparagine 1242. The EGF-like 32; calcium-binding domain maps to 1259–1295 (NKDDCKPGACHNNGSCIDRVGGFECVCQPGFVGARCE). Asparagine 1271 is a glycosylation site (N-linked (GlcNAc...) asparagine). The O-linked (Fuc...) serine glycan is linked to serine 1273. 4 EGF-like domains span residues 1297-1335 (DINECLSNPCSNAGTLDCVQLVNNYHCNCRPGHMGRHCE), 1337-1373 (KVDFCAQSPCQNGGNCNIRQSGHHCICNNGFYGKNCE), 1375-1412 (SGQDCDSNPCRVGNCVVADEGFGYRCECPRGTLGEHCE), and 1415-1451 (TLDECSPNPCAQGAACEDLLGDYECLCPSKWKGKRCD). An O-linked (Glc...) serine glycan is attached at serine 1303. O-linked (Glc...) serine glycosylation occurs at serine 1381. 3 LNR repeats span residues 1482-1521 (CDKRGCTEKQGNGICDSDCNTYACNFDGNDCSLGINPWAN), 1522-1557 (CTANECWNKFKNGKCNEECNNAACHYDGHDCERKLK), and 1559-1599 (CDSL…TQSP). Asparagine 1521 carries N-linked (GlcNAc...) asparagine glycosylation. 6 disulfide bridges follow: cysteine 1522/cysteine 1545, cysteine 1527/cysteine 1540, cysteine 1536/cysteine 1552, cysteine 1559/cysteine 1585, cysteine 1567/cysteine 1580, and cysteine 1576/cysteine 1592. Asparagine 1594 and asparagine 1627 each carry an N-linked (GlcNAc...) asparagine glycan. Residues 1746–1766 (VITGIILVIIALAFFGMVLST) traverse the membrane as a helical segment. Topologically, residues 1767–2703 (QRKRAHGVTW…ANKGSEAIYI (937 aa)) are cytoplasmic. The disordered stretch occupies residues 1810 to 1850 (QSQGVGQPGAHWSDDESDMPLPKRQRSDPVSGVGLGNNGGY). ANK repeat units lie at residues 1901-1945 (CGLT…ELNA), 1950-1979 (TGETSLHLAARFARADAAKRLLDAGADANC), 1983-2013 (TGRTPLHAAVAADAMGVFQILLRNRATNLNA), 2017-2046 (DGTTPLILAARLAIEGMVEDLITADADINA), 2050-2079 (SGKTALHWAAAVNNTEAVNILLMHHANRDA), 2083-2112 (KDETPLFLAAREGSYEACKALLDNFANREI), and 2116-2139 (MDRLPRDVASERLHHDIVRLLDEH). The disordered stretch occupies residues 2172 to 2257 (TVISAGNGGN…LTGGVSGVPG (86 aa)). A compositionally biased stretch (low complexity) spans 2228–2238 (KKTSAASKKAA). The interval 2325 to 2328 (PPSY) is interaction with Nedd4. 4 disordered regions span residues 2399-2452 (SGAG…PTSP), 2488-2524 (GGGGGGGVGQGPQNSPVSLGIISPTGSDMGIMLAPPQ), 2579-2620 (LDLN…PSSQ), and 2632-2703 (PSSQ…AIYI). Over residues 2414-2429 (PYSNQSPPHSVQSSLA) the composition is skewed to polar residues. A Phosphoserine modification is found at serine 2447. The segment covering 2488–2497 (GGGGGGGVGQ) has biased composition (gly residues). Over residues 2598-2619 (PPSIQSSMSGSSPSTNMLSPSS) the composition is skewed to low complexity. Residues 2632-2653 (PSSQHSGGHTPQHLVQTLDSYP) are compositionally biased toward polar residues. Residues 2659–2675 (SPGHWSSSSPRSNSDWS) are compositionally biased toward low complexity. The span at 2677–2687 (GVQSPAANNLY) shows a compositional bias: polar residues.

The protein belongs to the NOTCH family. In terms of assembly, homomer. Interacts with Su(H) when activated. Interacts with Dx via its ANK repeats. Interacts with Delta via the EGF repeats and the Delta EGF repeats. Interacts with Nedd4 and Su(dx). Interacts with O-fut1; the interaction glycosylates N and transports N to early endosomes. Interacts with Akap200; the interaction stabilizes N/Notch protein levels by preventing Cbl-mediated ubiquitination and subsequent lysosomal degradation of N/Notch. Post-translationally, upon binding its ligands such as Delta or Serrate, it is cleaved (S2 cleavage) in its extracellular domain, close to the transmembrane domain. S2 cleavage is probably mediated by Kuz. It is then cleaved (S3 cleavage) downstream of its transmembrane domain, releasing it from the cell membrane. S3 cleavage requires Psn. In terms of processing, O-glycosylated. Three forms of O-glycosylation (O-fucosylation, O-glucosylation and O-GlcNAcylation) are detected. O-fucosylated by O-fut1 and fng in the EGF repeat domain inhibits both Serrate/Ser- and Delta/Dl-binding. O-glucosylation by rumi in the endoplasmic reticulum is necessary for correct folding and signaling. Ubiquitinated by various ubiquitin ligases; which promotes ligand-independent endocytosis and proteasomal degradation. Ubiquitinated by Nedd4. May also be ubiquitinated by Su(dx) and Cbl. Mono-ubiquitinated, possibly by dx/deltex; this may be involved in the ESCRT-III mediated targeting to multivesicular bodies.

Its subcellular location is the cell membrane. The protein resides in the endosome. The protein localises to the multivesicular body. It is found in the nucleus. Its function is as follows. Essential signaling protein which has a major role in many developmental processes. Functions as a receptor for membrane-bound ligands Delta and Serrate to regulate cell-fate determination. Upon ligand activation, and releasing from the cell membrane, the Notch intracellular domain (NICD) forms a transcriptional activator complex with Su(H) (Suppressor of hairless) and activates genes of the E(spl) complex. Regulates oogenesis, the differentiation of the ectoderm and the development of the central and peripheral nervous system, eye, wing disk, muscles and segmental appendages such as antennae and legs, through lateral inhibition or induction. Regulates neuroblast self-renewal, identity and proliferation through the regulation of bHLH-O proteins; in larval brains, involved in the maintenance of type II neuroblast self-renewal and identity by suppressing erm expression together with pnt; might also regulate dpn expression through the activation of the transcriptional regulator Su(H). Targeted for ESCRT-mediated endosomal sequestration and lysosomal degradation by various E3 ubiquitin ligases to regulate the Notch signaling pathway. Can undergo ligand-dependent and non-canonical ligand-independent activation. Ligand-independent activation is dependent on endosome acidification and probably occurs in late endosomes or lysosome. Ectopic ligand-independent activation occurs when disruption of the endolysosomal pathway, particularly of the ESCRT-III complex, prevents sequestration of the receptor in intraluminal vesicles of multivesicular bodies. This Drosophila melanogaster (Fruit fly) protein is Neurogenic locus Notch protein.